The sequence spans 270 residues: UPF0354 protein BcerKBAB4_4524 (270 aa).

This sequence belongs to the UPF0354 family.

The protein is UPF0354 protein BcerKBAB4_4524 of Bacillus mycoides (strain KBAB4) (Bacillus weihenstephanensis).